A 362-amino-acid chain; its full sequence is Probable cinnamyl alcohol dehydrogenase 9 (362 aa).

A Zn(2+)-binding site is contributed by cysteine 45. Residue serine 47 coordinates NADP(+). Zn(2+)-binding residues include histidine 67, glutamate 68, cysteine 98, cysteine 101, cysteine 104, cysteine 112, and cysteine 167. NADP(+) contacts are provided by residues threonine 171, 192 to 197, 215 to 220, threonine 255, glycine 279, and 302 to 304; these read GLGGLG, STSPWK, and SMI.

The protein belongs to the zinc-containing alcohol dehydrogenase family. Homodimer. Zn(2+) is required as a cofactor.

The catalysed reaction is (E)-cinnamyl alcohol + NADP(+) = (E)-cinnamaldehyde + NADPH + H(+). It catalyses the reaction (E)-coniferol + NADP(+) = (E)-coniferaldehyde + NADPH + H(+). It carries out the reaction (E)-sinapyl alcohol + NADP(+) = (E)-sinapaldehyde + NADPH + H(+). The enzyme catalyses (E)-4-coumaroyl alcohol + NADP(+) = (E)-4-coumaraldehyde + NADPH + H(+). The catalysed reaction is (E)-caffeyl alcohol + NADP(+) = (E)-caffeyl aldehyde + NADPH + H(+). Its pathway is aromatic compound metabolism; phenylpropanoid biosynthesis. Functionally, involved in lignin biosynthesis. Catalyzes the final step specific for the production of lignin monomers. Catalyzes the NADPH-dependent reduction of coniferaldehyde, 5-hydroxyconiferaldehyde, sinapaldehyde, 4-coumaraldehyde and caffeyl aldehyde to their respective alcohols. The sequence is that of Probable cinnamyl alcohol dehydrogenase 9 from Oryza sativa subsp. japonica (Rice).